Consider the following 590-residue polypeptide: NADH-ubiquinone oxidoreductase chain 5 (590 aa).

Helical transmembrane passes span 1 to 21, 31 to 51, 77 to 97, 104 to 124, 130 to 150, 167 to 187, 190 to 210, 230 to 250, 261 to 281, 314 to 336, 355 to 375, 398 to 418, 439 to 461, 466 to 486, and 568 to 588; these read MNLI…MSIM, LMVL…NNEL, LLFT…SLWY, INKF…IITA, LFIG…WWHG, IGDI…SINM, LMIQ…AAAT, TPVS…FLLI, IMLT…AAAA, AFLH…GSYI, LPMT…MPFL, IMIT…IMLF, HPLA…STLQ, VTMP…GVLL, and MIKN…LFIM.

It belongs to the complex I subunit 5 family.

The protein localises to the mitochondrion inner membrane. It carries out the reaction a ubiquinone + NADH + 5 H(+)(in) = a ubiquinol + NAD(+) + 4 H(+)(out). Its function is as follows. Core subunit of the mitochondrial membrane respiratory chain NADH dehydrogenase (Complex I) that is believed to belong to the minimal assembly required for catalysis. Complex I functions in the transfer of electrons from NADH to the respiratory chain. The immediate electron acceptor for the enzyme is believed to be ubiquinone. This is NADH-ubiquinone oxidoreductase chain 5 (MT-ND5) from Lycodon semicarinatus (Ryukyu odd-tooth snake).